We begin with the raw amino-acid sequence, 635 residues long: Cationic amino acid transporter 2, vacuolar (635 aa).

Over M1–H48 the chain is Cytoplasmic. Residues L49–V69 traverse the membrane as a helical segment. Over A70 to P76 the chain is Vacuolar. Residues S77–A97 form a helical membrane-spanning segment. Topologically, residues E98–S108 are cytoplasmic. Residues A109–L131 form a helical membrane-spanning segment. Residues E132 to D171 lie on the Vacuolar side of the membrane. The chain crosses the membrane as a helical span at residues I172–G192. Topologically, residues I193–Q200 are cytoplasmic. The helical transmembrane segment at G201–L221 threads the bilayer. At G222–G235 the chain is on the vacuolar side. The helical transmembrane segment at F236 to I256 threads the bilayer. Topologically, residues G257–G280 are cytoplasmic. The helical transmembrane segment at L281–I301 threads the bilayer. The Vacuolar portion of the chain corresponds to P302–A324. Residues V325 to L345 form a helical membrane-spanning segment. Over P346–K376 the chain is Cytoplasmic. The chain crosses the membrane as a helical span at residues A377–L397. Position 398 (A398) is a topological domain, vacuolar. The helical transmembrane segment at G399–L419 threads the bilayer. Residues R420–R493 lie on the Cytoplasmic side of the membrane. The chain crosses the membrane as a helical span at residues I494–A514. At S515–R524 the chain is on the vacuolar side. The chain crosses the membrane as a helical span at residues Y525 to I545. At D546 to Y560 the chain is on the cytoplasmic side. The chain crosses the membrane as a helical span at residues M561–V581. Residues N582–S585 are Vacuolar-facing. Residues A586–G606 traverse the membrane as a helical segment. Over R607–A635 the chain is Cytoplasmic.

It belongs to the amino acid-polyamine-organocation (APC) superfamily. Cationic amino acid transporter (CAT) (TC 2.A.3.3) family. As to expression, expressed in roots, stems, flowers, leaves, and siliques.

It is found in the vacuole membrane. In terms of biological role, permease involved in the transport of the cationic amino acids. The sequence is that of Cationic amino acid transporter 2, vacuolar (CAT2) from Arabidopsis thaliana (Mouse-ear cress).